The primary structure comprises 234 residues: Inosine triphosphate pyrophosphatase (234 aa).

11 to 16 contributes to the ITP binding site; it reads SGNKGK. E40 lines the Mg(2+) pocket. ITP-binding positions include K53, 81 to 82, K98, 176 to 179, K203, and 208 to 209; these read DT, FGWD, and HR.

The protein belongs to the HAM1 NTPase family. As to quaternary structure, homodimer. Requires Mg(2+) as cofactor. The cofactor is Mn(2+).

Its subcellular location is the cytoplasm. The enzyme catalyses ITP + H2O = IMP + diphosphate + H(+). The catalysed reaction is dITP + H2O = dIMP + diphosphate + H(+). It carries out the reaction XTP + H2O = XMP + diphosphate + H(+). Its function is as follows. Pyrophosphatase that hydrolyzes non-canonical purine nucleotides such as inosine triphosphate (ITP), deoxyinosine triphosphate (dITP) or xanthosine 5'-triphosphate (XTP) to their respective monophosphate derivatives. The enzyme does not distinguish between the deoxy- and ribose forms. Probably excludes non-canonical purines from RNA and DNA precursor pools, thus preventing their incorporation into RNA and DNA and avoiding chromosomal lesions. This Leishmania major protein is Inosine triphosphate pyrophosphatase.